We begin with the raw amino-acid sequence, 157 residues long: Regenerating islet-derived protein 4 (157 aa).

Residues 1 to 22 (MASKGVRLLLLLSWVAGPEVLS) form the signal peptide. Cysteines 29 and 40 form a disulfide. The 119-residue stretch at 36-154 (YRSHCYGYFR…CANRQHFLCK (119 aa)) folds into the C-type lectin domain. N49 and N62 each carry an N-linked (GlcNAc...) asparagine glycan. 2 disulfides stabilise this stretch: C57–C153 and C128–C145. A carbohydrate contacts are provided by residues 97–102 (DPQKKQ) and 134–136 (KDK).

It is found in the secreted. In terms of biological role, calcium-independent lectin displaying mannose-binding specificity and able to maintain carbohydrate recognition activity in an acidic environment. May be involved in inflammatory and metaplastic responses of the gastrointestinal epithelium. The protein is Regenerating islet-derived protein 4 (Reg4) of Mus musculus (Mouse).